We begin with the raw amino-acid sequence, 224 residues long: UPF0758 protein SPO0054 (224 aa).

One can recognise an MPN domain in the interval Val-102–Leu-224. Zn(2+)-binding residues include His-173, His-175, and Asp-186. Positions His-173–Asp-186 match the JAMM motif motif.

The protein belongs to the UPF0758 family.

This chain is UPF0758 protein SPO0054, found in Ruegeria pomeroyi (strain ATCC 700808 / DSM 15171 / DSS-3) (Silicibacter pomeroyi).